The chain runs to 172 residues: MGAIHDEPFTACGDETECFGGNREGSQSFHSSSTKEENLEDSYLYLVHQRSMSIFFWDERANTGVAGAVDEGKIIDFEFLNPDEKRIIEEHANKEREEGVDVILVNFDRREYMLNLRRWNMGTSPLYILVSGRYNVVKGCRLKEGNEIRIWSFHFDDQLNLAMVPLTPTESG.

The TF-B3 DNA-binding region spans 69-169 (VDEGKIIDFE…NLAMVPLTPT (101 aa)).

It localises to the nucleus. The sequence is that of Putative B3 domain-containing protein At1g05615 from Arabidopsis thaliana (Mouse-ear cress).